We begin with the raw amino-acid sequence, 443 residues long: MADLETSDLSRVLPSSNLLSLEQLQEQLKRHRDELFQQQQDSHVLGSKPDDSLNNNYLLSHQYHDSQVYIPSNTWSFTQGLIVGQLSVVFVIVIFIKFFVFAESSPALAKSSITKDASVVIVKRDKKDQSSSDDADPDDDSETTASNAKVAAILEKTYYDVDNHSPESLDWFNVLVAQTIAQLRSEALLSDNIYHSLNNFLLKSELPEYLDKINLTEIDIGDDFPIFSNCRIKHSKDGSGRLEAKIDVDLSDTLTLGIETKLLLNHPRPLTAVLPVQLSVSMVRFSGCLTVSLINTADPEFAELSAHNSPEPGEPMSRSHSAGSPGGDSSHDEVISTPDSSSHTAQRKHSKDDPNDGTALMFSFSPDYRLEFTVKSLIGARAKLQDVPKISSLIENRLRAWFIERCIEPRFQVVRLPSLWPRRKNTREQVTNKNGDKVEDGSN.

Topologically, residues 1–80 are lumenal; it reads MADLETSDLS…PSNTWSFTQG (80 aa). Residues 81–101 form a helical membrane-spanning segment; that stretch reads LIVGQLSVVFVIVIFIKFFVF. At 102–443 the chain is on the cytoplasmic side; it reads AESSPALAKS…NGDKVEDGSN (342 aa). 2 disordered regions span residues 126 to 146 and 304 to 358; these read KKDQSSSDDADPDDDSETTAS and LSAH…NDGT. Over residues 131 to 142 the composition is skewed to acidic residues; the sequence is SSDDADPDDDSE. The SMP-LTD domain maps to 165 to 417; it reads SPESLDWFNV…EPRFQVVRLP (253 aa).

It belongs to the MMM1 family. In terms of assembly, homodimer. Component of the ER-mitochondria encounter structure (ERMES) or MDM complex, composed of MMM1, MDM10, MDM12 and MDM34. An MMM1 homodimer associates with one molecule of MDM12 on each side in a pairwise head-to-tail manner, and the SMP-LTD domains of MMM1 and MDM12 generate a continuous hydrophobic tunnel for phospholipid trafficking.

It localises to the endoplasmic reticulum membrane. In terms of biological role, component of the ERMES/MDM complex, which serves as a molecular tether to connect the endoplasmic reticulum (ER) and mitochondria. Components of this complex are involved in the control of mitochondrial shape and protein biogenesis, and function in nonvesicular lipid trafficking between the ER and mitochondria. The MDM12-MMM1 subcomplex functions in the major beta-barrel assembly pathway that is responsible for biogenesis of all outer membrane beta-barrel proteins, and acts in a late step after the SAM complex. The MDM10-MDM12-MMM1 subcomplex further acts in the TOM40-specific pathway after the action of the MDM12-MMM1 complex. Essential for establishing and maintaining the structure of mitochondria and maintenance of mtDNA nucleoids. This chain is Maintenance of mitochondrial morphology protein 1, found in Scheffersomyces stipitis (strain ATCC 58785 / CBS 6054 / NBRC 10063 / NRRL Y-11545) (Yeast).